The sequence spans 678 residues: Protein hook (678 aa).

An interaction with microtubules region spans residues 1–155; it reads MSTQNGMYYS…NIMRALQELE (155 aa). The Calponin-homology (CH) domain maps to 5-123; sequence NGMYYSLLEW…RLLQLVLGCA (119 aa). Coiled coils occupy residues 135–435 and 479–589; these read EIMC…LKCG and QTAL…AKEV.

The protein belongs to the hook family. As to quaternary structure, homodimer. Interacts with microtubules via its N-terminus.

It is found in the cytoplasm. Its subcellular location is the cytoskeleton. The protein resides in the endosome. It localises to the synapse. In terms of biological role, involved in endocytic trafficking by stabilizing organelles of the endocytic pathway. Probably acts as a cytoskeletal linker protein required to tether endosome vesicles to the cytoskeleton. Involved in modulation of endocytosis at stages required for down-regulation of membrane proteins that control synapse size. Not involved in synaptic vesicle recycling. Required in R7 cells for boss endocytosis into multivesicular bodies (MVBs). Has a role in regulating adult longevity. This is Protein hook from Drosophila virilis (Fruit fly).